A 508-amino-acid chain; its full sequence is Amphoterin-induced protein 3 (508 aa).

An N-terminal signal peptide occupies residues 1–19; that stretch reads MAWLVLSGILLCMLGAGLG. Topologically, residues 20-383 are extracellular; it reads TSDLEDVLPP…ARPEPETFNT (364 aa). Positions 25–61 constitute an LRRNT domain; that stretch reads DVLPPAPHNCPDICICAADVLSCAGRGLQDLPVALPT. Cystine bridges form between cysteine 34/cysteine 40 and cysteine 38/cysteine 47. LRR repeat units follow at residues 62–83, 86–107, 110–133, 134–155, 158–178, and 184–207; these read TAAE…WLAP, RLRA…AFTN, GLRT…DGLE, ELEK…AFQG, MLSH…NHLH, and RLRT…AALP. Asparagine 107 is a glycosylation site (N-linked (GlcNAc...) asparagine). Asparagine 142 carries N-linked (GlcNAc...) asparagine glycosylation. An LRRCT domain is found at 219 to 275; sequence NPLPCDCSLYHLLRRWHQRGLSALHDFEREYTCLVFKVSESRVRFFEHSRVFKNCSV. Intrachain disulfides connect cysteine 223–cysteine 251, cysteine 225–cysteine 273, and cysteine 300–cysteine 352. Residues asparagine 272, asparagine 301, asparagine 362, and asparagine 368 are each glycosylated (N-linked (GlcNAc...) asparagine). Positions 279–370 constitute an Ig-like C2-type domain; it reads PGLELPEEQL…HNQTLEYNVS (92 aa). The helical transmembrane segment at 384–404 threads the bilayer; sequence GFTTLLGCIVGLVLVLLYLFA. Over 405-508 the chain is Cytoplasmic; that stretch reads PPCRGCCHCC…STGSEGLVMS (104 aa).

This sequence belongs to the immunoglobulin superfamily. AMIGO family. In terms of assembly, binds AMIGO1 or AMIGO2. As to expression, ubiquitous.

It is found in the membrane. Functionally, may mediate heterophilic cell-cell interaction. May contribute to signal transduction through its intracellular domain. The protein is Amphoterin-induced protein 3 of Mus musculus (Mouse).